Consider the following 240-residue polypeptide: Glutathione S-transferase U9 (240 aa).

The GST N-terminal domain occupies 7 to 86; that stretch reads NKVILHGSFA…YIDETWSNGP (80 aa). Residues 17–18, 43–44, 57–58, and 70–71 each bind glutathione; these read SP, NK, KI, and ES. In terms of domain architecture, GST C-terminal spans 92-226; it reads DPYRRSKVRF…EQILEILRAF (135 aa). T161 carries the post-translational modification Phosphothreonine.

This sequence belongs to the GST superfamily. Tau family.

Its subcellular location is the cytoplasm. It localises to the cytosol. It catalyses the reaction RX + glutathione = an S-substituted glutathione + a halide anion + H(+). In terms of biological role, may be involved in the conjugation of reduced glutathione to a wide number of exogenous and endogenous hydrophobic electrophiles and have a detoxification role against certain herbicides. The protein is Glutathione S-transferase U9 (GSTU9) of Arabidopsis thaliana (Mouse-ear cress).